The following is a 715-amino-acid chain: Protein DENND6 homolog (715 aa).

Residues methionine 13–glutamate 58 adopt a coiled-coil conformation. One can recognise a uDENN domain in the interval asparagine 96 to serine 273. Disordered stretches follow at residues leucine 269–threonine 296 and serine 392–asparagine 416. The cDENN domain occupies serine 299–aspartate 476. A compositionally biased stretch (low complexity) spans serine 399–asparagine 416. Positions lysine 478–glutamine 600 constitute a dDENN domain.

Belongs to the DENND6 family.

The polypeptide is Protein DENND6 homolog (Dictyostelium discoideum (Social amoeba)).